The primary structure comprises 167 residues: RNA pyrophosphohydrolase (167 aa).

A Nudix hydrolase domain is found at 8–159 (PYRTCVGVML…KRPVYERVVK (152 aa)). Positions 47 to 68 (GGVDPGEDTWAAAKRELYEETS) match the Nudix box motif.

The protein belongs to the Nudix hydrolase family. RppH subfamily. It depends on a divalent metal cation as a cofactor.

Accelerates the degradation of transcripts by removing pyrophosphate from the 5'-end of triphosphorylated RNA, leading to a more labile monophosphorylated state that can stimulate subsequent ribonuclease cleavage. This is RNA pyrophosphohydrolase from Bradyrhizobium diazoefficiens (strain JCM 10833 / BCRC 13528 / IAM 13628 / NBRC 14792 / USDA 110).